Reading from the N-terminus, the 174-residue chain is Large ribosomal subunit protein uL10 (174 aa).

The protein belongs to the universal ribosomal protein uL10 family. As to quaternary structure, part of the ribosomal stalk of the 50S ribosomal subunit. The N-terminus interacts with L11 and the large rRNA to form the base of the stalk. The C-terminus forms an elongated spine to which L12 dimers bind in a sequential fashion forming a multimeric L10(L12)X complex.

In terms of biological role, forms part of the ribosomal stalk, playing a central role in the interaction of the ribosome with GTP-bound translation factors. In Methylibium petroleiphilum (strain ATCC BAA-1232 / LMG 22953 / PM1), this protein is Large ribosomal subunit protein uL10.